Consider the following 327-residue polypeptide: Probable cell division protein WhiA (327 aa).

Positions 275 to 308 form a DNA-binding region, H-T-H motif; that stretch reads SLEELGRLADPPMTKDAVAGRIRRLLSMADRKAK.

The protein belongs to the WhiA family.

In terms of biological role, involved in cell division and chromosome segregation. This is Probable cell division protein WhiA from Mycobacterium marinum (strain ATCC BAA-535 / M).